The primary structure comprises 215 residues: Cytochrome b6 (215 aa).

A helical transmembrane segment spans residues 32–52 (IFYCLGGITLTCFLVQVATGF). Residue cysteine 35 participates in heme c binding. Heme b is bound by residues histidine 86 and histidine 100. The next 3 membrane-spanning stretches (helical) occupy residues 90-110 (ASMM…TGGF), 116-136 (LTWV…VTGY), and 186-206 (LHTF…FSMI). 2 residues coordinate heme b: histidine 187 and histidine 202.

The protein belongs to the cytochrome b family. PetB subfamily. The 4 large subunits of the cytochrome b6-f complex are cytochrome b6, subunit IV (17 kDa polypeptide, PetD), cytochrome f and the Rieske protein, while the 4 small subunits are PetG, PetL, PetM and PetN. The complex functions as a dimer. Heme b is required as a cofactor. Requires heme c as cofactor.

It localises to the plastid. Its subcellular location is the chloroplast thylakoid membrane. Its function is as follows. Component of the cytochrome b6-f complex, which mediates electron transfer between photosystem II (PSII) and photosystem I (PSI), cyclic electron flow around PSI, and state transitions. This chain is Cytochrome b6, found in Lotus japonicus (Lotus corniculatus var. japonicus).